A 482-amino-acid polypeptide reads, in one-letter code: Zinc finger protein 223 (482 aa).

A KRAB domain is found at 8–78 (VTFKDVAVVF…DIATQREGNS (71 aa)). 5 C2H2-type zinc fingers span residues 176–198 (HSCD…QRVH), 204–226 (FKCD…QRVH), 232–254 (FKCE…CKLH), 260–282 (YNCE…QRIH), and 288–310 (FKCE…CVVH). The C2H2-type 6; degenerate zinc-finger motif lies at 316–338 (NSTGEYGKGFIRRLDLCKHQTIH). 3 consecutive C2H2-type zinc fingers follow at residues 344-366 (YNCK…QRVH), 372-394 (YKCD…HRAH), and 400-422 (YNCD…KRLH). Residues 428 to 450 (FKCEDCGKKLVYRSYRKDQQKNH) form a C2H2-type 10; degenerate zinc finger.

Belongs to the krueppel C2H2-type zinc-finger protein family.

The protein localises to the nucleus. May be involved in transcriptional regulation. This Homo sapiens (Human) protein is Zinc finger protein 223 (ZNF223).